The chain runs to 439 residues: MTAADLGRYKRFVQYFWDPEPTNDTASQSPIWCLGKEYPILEKSATSAITDSPPQEGHYLPAQSLPTNEVTTPPDSTVGSLESSSGSQNCDTANADGGWPSAFLDDFEAKIWLTYRSNFPAIAKSQDPKALSAMSLSVRLRSQLVDQGGFTSDTGWGCMIRSGQSLLANALLTLRMGREWRRGVSSNEERKILSLFADDPRAPYSIHKFVEHGASACGKHPGEWFGPSATARCIQALSNSQAKSELRVYITGDGSDVYEDKFMSIAKPNHSDFTPTLILVGTRLGLDKITPVYWEALKYSLQMPQSVGIAGGRPSSSHYFIGVQESDFFYLDPHQTRPALPYKDNVEDYTTEDIDSCHTRRLRRLHIKEMDPSMLIAFLIRDENDWNEWRRAVKEVQGKGVIHVADTDPASYGLGGERDGAIDEVETFDDDDDDTILDA.

Residues 48–92 (AITDSPPQEGHYLPAQSLPTNEVTTPPDSTVGSLESSSGSQNCDT) form a disordered region. A compositionally biased stretch (polar residues) spans 64–75 (SLPTNEVTTPPD). Low complexity predominate over residues 76–87 (STVGSLESSSGS). C158 (nucleophile) is an active-site residue. Catalysis depends on residues D332 and H334.

Belongs to the peptidase C54 family.

The protein resides in the cytoplasm. It is found in the nucleus. The protein localises to the preautophagosomal structure. It carries out the reaction [protein]-C-terminal L-amino acid-glycyl-phosphatidylethanolamide + H2O = [protein]-C-terminal L-amino acid-glycine + a 1,2-diacyl-sn-glycero-3-phosphoethanolamine. Cysteine protease that plays a key role in cytoplasm to vacuole transport (Cvt) and autophagy by mediating both proteolytic activation and delipidation of ATG8. Required for selective autophagic degradation of the nucleus (nucleophagy) as well as for mitophagy which contributes to regulate mitochondrial quantity and quality by eliminating the mitochondria to a basal level to fulfill cellular energy requirements and preventing excess ROS production. The protease activity is required for proteolytic activation of ATG8: cleaves the C-terminal amino acid of ATG8 to reveal a C-terminal glycine. ATG8 ubiquitin-like activity requires the exposure of the glycine at the C-terminus for its conjugation to phosphatidylethanolamine (PE) and its insertion to membranes, which is necessary for autophagy. The ATG8-PE conjugate mediates tethering between adjacent membranes and stimulates membrane hemifusion, leading to expansion of the autophagosomal membrane during autophagy. In addition to the protease activity, also catalyzes deconjugation of PE-conjugated forms of ATG8 during macroautophagy: ATG8 delipidation is required to release the protein from membranes, which facilitates multiple events during macroautophagy, and especially for efficient autophagosome biogenesis, the assembly of ATG9-containing tubulovesicular clusters into phagophores/autophagosomes, and for the disassembly of PAS-associated ATG components. ATG8 delipidation by ATG4 also recycles ATG8-PE generated on inappropriate membranes to maintain a reservoir of unlipidated ATG8 that is required for autophagosome formation at the PAS. This is Probable cysteine protease atg4 (atg4) from Botryotinia fuckeliana (strain B05.10) (Noble rot fungus).